The following is a 585-amino-acid chain: Pentatricopeptide repeat-containing protein At4g21170 (585 aa).

PPR repeat units follow at residues 152–186, 187–221, 222–247, 252–286, 287–321, 324–358, 360–394, 396–431, 432–466, 467–501, 502–534, and 538–572; these read LSVSLSLVLEYYALKGSHHNGLEVFGFMRRLRLSP, SQSAYNSLLGSLVKENQFRVALCLYSAMVRNGIVS, DELTWDLIAQILCEQGRSKSVFKLME, SCKIYTNLVECYSRNGEFDAVFSLIHEMDDKKLEL, SFCSYGCVLDDACRLGDAEFIDKVLCLMVEKKFVT, DSAVNDKIIERLCDMGKTFASEMLFRKACNGETVR, WDSTYGCMLKALSRKKRTKEAVDVYRMICRKGITV, DESCYIEFANALCRDDNSSEEEEELLVDVIKRGFVP, CTHKLSEVLASMCRKRRWKSAEKLLDSVMEMEVYF, DSFACGLLMERYCRSGKLEKALVLHEKIKKMKGSL, DVNAYNAVLDRLMMRQKEMVEEAVVVFEYMKEI, and NSKSFTIMIQGLCRVKEMKKAMRSHDEMLRLGLKP.

The protein belongs to the PPR family. P subfamily.

In Arabidopsis thaliana (Mouse-ear cress), this protein is Pentatricopeptide repeat-containing protein At4g21170.